The primary structure comprises 128 residues: Kinase-associated lipoprotein B (128 aa).

The signal sequence occupies residues 1 to 25 (MSTFETGSIVKGFYKTGVYIGEITA). C26 carries the N-palmitoyl cysteine lipid modification. C26 carries the S-diacylglycerol cysteine lipid modification.

Its subcellular location is the cell membrane. Its function is as follows. May play a role in the activation or the expression of KinB. The protein is Kinase-associated lipoprotein B (kapB) of Bacillus subtilis (strain 168).